The sequence spans 261 residues: GTP cyclohydrolase FolE2 (261 aa).

It belongs to the GTP cyclohydrolase IV family.

The catalysed reaction is GTP + H2O = 7,8-dihydroneopterin 3'-triphosphate + formate + H(+). The protein operates within cofactor biosynthesis; 7,8-dihydroneopterin triphosphate biosynthesis; 7,8-dihydroneopterin triphosphate from GTP: step 1/1. Its function is as follows. Converts GTP to 7,8-dihydroneopterin triphosphate. The sequence is that of GTP cyclohydrolase FolE2 from Geobacter metallireducens (strain ATCC 53774 / DSM 7210 / GS-15).